The following is a 640-amino-acid chain: Envelope glycoprotein (640 aa).

The signal sequence occupies residues 1–32 (MEGPAFSKPLKDKINPWGPLIILGILIRAGVS). At 33 to 582 (VQHDSPHQVF…FNKSPWFTTL (550 aa)) the chain is on the extracellular side. N43 and N58 each carry an N-linked (GlcNAc...) asparagine; by host glycan. 2 cysteine pairs are disulfide-bonded: C109–C126 and C118–C131. An N-linked (GlcNAc...) asparagine; by host glycan is attached at N297. 6 disulfide bridges follow: C307/C310, C307/C535, C337/C391, C356/C368, C398/C411, and C527/C534. The CXXC signature appears at 307–310 (CWLC). N-linked (GlcNAc...) asparagine; by host glycosylation is found at N329 and N336. N369 is a glycosylation site (N-linked (GlcNAc...) asparagine; by host). Positions 444–464 (VSLTLALLLGGLTMGGIAAGV) are fusion peptide. A coiled-coil region spans residues 473-509 (ATQQFQQLQAAMHDDLKEVEKSITNLEKSLTSLSEVV). Residues 510–526 (LQNRRGLDLLFLKEGGL) form an immunosuppression region. The CX6CC motif lies at 527-535 (CAALKEECC). A helical membrane pass occupies residues 583-603 (ISTIMGPLIILLLILLFGPWI). At 604–640 (LNRLVQFIKDRISVVQALVLTQQYHQLKTIGDCKSRE) the chain is on the cytoplasmic side. The YXXL motif; contains endocytosis signal motif lies at 627 to 630 (YHQL).

As to quaternary structure, the mature envelope protein (Env) consists of a trimer of SU-TM heterodimers attached by a labile interchain disulfide bond. Post-translationally, specific enzymatic cleavages in vivo yield mature proteins. Envelope glycoproteins are synthesized as an inactive precursor that is N-glycosylated and processed likely by host cell furin or by a furin-like protease in the Golgi to yield the mature SU and TM proteins. The cleavage site between SU and TM requires the minimal sequence [KR]-X-[KR]-R. The R-peptide is released from the C-terminus of the cytoplasmic tail of the TM protein upon particle formation as a result of proteolytic cleavage by the viral protease. Cleavage of this peptide is required for TM to become fusogenic. In terms of processing, the CXXC motif is highly conserved across a broad range of retroviral envelope proteins. It is thought to participate in the formation of a labile disulfide bond possibly with the CX6CC motif present in the transmembrane protein. Isomerization of the intersubunit disulfide bond to an SU intrachain disulfide bond is thought to occur upon receptor recognition in order to allow membrane fusion. The R-peptide is palmitoylated.

It localises to the virion membrane. The protein localises to the host cell membrane. In terms of biological role, the surface protein (SU) attaches the virus to the host cell by binding to its receptor. This interaction triggers the refolding of the transmembrane protein (TM) and is thought to activate its fusogenic potential by unmasking its fusion peptide. Fusion occurs at the host cell plasma membrane. The transmembrane protein (TM) acts as a class I viral fusion protein. Under the current model, the protein has at least 3 conformational states: pre-fusion native state, pre-hairpin intermediate state, and post-fusion hairpin state. During viral and target cell membrane fusion, the coiled coil regions (heptad repeats) assume a trimer-of-hairpins structure, positioning the fusion peptide in close proximity to the C-terminal region of the ectodomain. The formation of this structure appears to drive apposition and subsequent fusion of viral and target cell membranes. Membranes fusion leads to delivery of the nucleocapsid into the cytoplasm. In Mus musculus (Mouse), this protein is Envelope glycoprotein (env).